Reading from the N-terminus, the 147-residue chain is Calcium-regulated heat-stable protein 1 (147 aa).

Over residues 1–12 (MSSEPPPPPQPP) the composition is skewed to pro residues. A disordered region spans residues 1–52 (MSSEPPPPPQPPTHQASVGLLDTPRSRERSPSPLRGNVVPSPLPTRRTRTFS). N-acetylserine is present on serine 2. Phosphoserine occurs at positions 30, 32, and 41. Threonine 45 is modified (phosphothreonine). Serine 52 and serine 58 each carry phosphoserine. In terms of domain architecture, CSD spans 62–129 (VYKGVCKCFC…KLQAVEVVIT (68 aa)). 2 positions are modified to phosphoserine: serine 146 and serine 147.

As to quaternary structure, homodimer. Interacts with STYX. Post-translationally, dephosphorylated by calcineurin in a Ca(2+) dependent manner. Can be phosphorylated by DYRK2 (in vitro).

It is found in the cytoplasm. Its subcellular location is the P-body. It localises to the cytoplasmic granule. In terms of biological role, binds mRNA and regulates the stability of target mRNA. Binds single-stranded DNA (in vitro). This chain is Calcium-regulated heat-stable protein 1 (CARHSP1), found in Homo sapiens (Human).